The primary structure comprises 275 residues: Caspase-3 (275 aa).

Residue Met-1 is modified to N-acetylmethionine. 2 propeptides span residues 1–9 and 10–28; these read MENTENSVD and SKSIKTSETKILHGSKSMD. N6-acetyllysine is present on Lys-11. At Ser-26 the chain carries Phosphoserine. Residues His-121 and Cys-163 contribute to the active site. S-nitrosocysteine; in inhibited form is present on Cys-163.

Belongs to the peptidase C14A family. As to quaternary structure, heterotetramer that consists of two anti-parallel arranged heterodimers, each one formed by a 17 kDa (p17) and a 12 kDa (p12) subunit. Interacts with BIRC6/bruce. Cleavage by granzyme B, caspase-6, caspase-8 and caspase-10 generates the two active subunits. Additional processing of the propeptides is likely due to the autocatalytic activity of the activated protease. Active heterodimers between the small subunit of caspase-7 protease and the large subunit of caspase-3 also occur and vice versa. In terms of processing, S-nitrosylated on its catalytic site cysteine in unstimulated cell lines and denitrosylated upon activation of the Fas apoptotic pathway, associated with an increase in intracellular caspase activity. Fas therefore activates caspase-3 not only by inducing the cleavage of the caspase zymogen to its active subunits, but also by stimulating the denitrosylation of its active site thiol. Post-translationally, ubiquitinated by BIRC6; this activity is inhibited by DIABLO/SMAC.

The protein resides in the cytoplasm. The catalysed reaction is Strict requirement for an Asp residue at positions P1 and P4. It has a preferred cleavage sequence of Asp-Xaa-Xaa-Asp-|- with a hydrophobic amino-acid residue at P2 and a hydrophilic amino-acid residue at P3, although Val or Ala are also accepted at this position.. With respect to regulation, inhibited by BIRC6; following inhibition of BIRC6-caspase binding by DIABLO/SMAC, BIRC6 is subjected to caspase cleavage, leading to an increase in active caspases. In terms of biological role, involved in the activation cascade of caspases responsible for apoptosis execution. At the onset of apoptosis, it proteolytically cleaves poly(ADP-ribose) polymerase PARP1 at a '216-Asp-|-Gly-217' bond. Cleaves and activates sterol regulatory element binding proteins (SREBPs) between the basic helix-loop-helix leucine zipper domain and the membrane attachment domain. Cleaves and activates caspase-6, -7 and -9 (CASP6, CASP7 and CASP9, respectively). Cleaves and inactivates interleukin-18 (IL18). Triggers cell adhesion in sympathetic neurons through RET cleavage. Cleaves IL-1 beta between an Asp and an Ala, releasing the mature cytokine which is involved in a variety of inflammatory processes. Cleaves and inhibits serine/threonine-protein kinase AKT1 in response to oxidative stress. Acts as an inhibitor of type I interferon production during virus-induced apoptosis by mediating cleavage of antiviral proteins CGAS, IRF3 and MAVS, thereby preventing cytokine overproduction. Also involved in pyroptosis by mediating cleavage and activation of gasdermin-E (GSDME). Cleaves XRCC4 and phospholipid scramblase proteins XKR4, XKR8 and XKR9, leading to promote phosphatidylserine exposure on apoptotic cell surface. Cleaves BIRC6 following inhibition of BIRC6-caspase binding by DIABLO/SMAC. The polypeptide is Caspase-3 (CASP3) (Bos taurus (Bovine)).